The chain runs to 66 residues: Large ribosomal subunit protein bL33c (66 aa).

Belongs to the bacterial ribosomal protein bL33 family.

It is found in the plastid. The protein resides in the chloroplast. This chain is Large ribosomal subunit protein bL33c, found in Crucihimalaya wallichii (Rock-cress).